Here is a 197-residue protein sequence, read N- to C-terminus: Carnitine operon protein CaiE (197 aa).

The protein belongs to the transferase hexapeptide repeat family.

Its pathway is amine and polyamine metabolism; carnitine metabolism. In terms of biological role, overproduction of CaiE stimulates the activity of CaiB and CaiD. The sequence is that of Carnitine operon protein CaiE from Citrobacter koseri (strain ATCC BAA-895 / CDC 4225-83 / SGSC4696).